A 237-amino-acid polypeptide reads, in one-letter code: MTPQAFYQVLIEHGITLTDKQKKQFETYFRLLVEWNEKINLTAITDKEEVYLKHFYDSIAPILQGYIDNSPLSILDIGAGAGFPSIPMKILYPEIDITIIDSLNKRINFLNILANELELSGVHFFHGRAEDFGQDRVFRAKFDIVTARAVAKMQVLAELTIPFLKVNGRLIALKAAAAEEELISAEKALKTLFSQVTVNKNYKLPNGDDRNITIVSKKKETPNKYPRKAGTPNKKPL.

Residues glycine 78, phenylalanine 83, 129-130, and arginine 148 each bind S-adenosyl-L-methionine; that span reads AE. The disordered stretch occupies residues 216–237; sequence SKKKETPNKYPRKAGTPNKKPL.

This sequence belongs to the methyltransferase superfamily. RNA methyltransferase RsmG family.

Its subcellular location is the cytoplasm. In terms of biological role, specifically methylates the N7 position of a guanine in 16S rRNA. In Streptococcus agalactiae serotype V (strain ATCC BAA-611 / 2603 V/R), this protein is Ribosomal RNA small subunit methyltransferase G.